The sequence spans 356 residues: Histidinol-phosphate aminotransferase (356 aa).

K214 is subject to N6-(pyridoxal phosphate)lysine.

Belongs to the class-II pyridoxal-phosphate-dependent aminotransferase family. Histidinol-phosphate aminotransferase subfamily. In terms of assembly, homodimer. Requires pyridoxal 5'-phosphate as cofactor.

The catalysed reaction is L-histidinol phosphate + 2-oxoglutarate = 3-(imidazol-4-yl)-2-oxopropyl phosphate + L-glutamate. Its pathway is amino-acid biosynthesis; L-histidine biosynthesis; L-histidine from 5-phospho-alpha-D-ribose 1-diphosphate: step 7/9. The polypeptide is Histidinol-phosphate aminotransferase (Escherichia coli O17:K52:H18 (strain UMN026 / ExPEC)).